A 433-amino-acid chain; its full sequence is MTQMDEAKKGVITDEMKAVAEAENVTPEFVRRGVASGKIAIPSNLNREEVAAVGIGAGLRTKVNATIGTSTDIVDFDMEEEKARIAIENRADTLMELSVGGDLDEIRRRILDLSPIPVGSVPVYQAAIETIREKGASIYMDEDVMFRAIEKQAKDGIDFMAIHCSVNRETLRRLKRQGREGGLVSRGGAFVSAWMVENGLENPLYENFDYILEIAKEHDFVLSMANAMRAGAIADSTDRAQVQELIVLGELIDRAREAGVQTIVEGPGHIPLNEIKANVILQKKLCRGAPFYMLGPIVTDIGAGYDHIVSSIGAAASAAAGADFICYVTPAEHLALPYPDDVKEGVIATRIGAYVGDMVKGIHNGEKDLEMANARKKLNWEAQFDAAMCPAEARRIRDERPPEDPDTCTMCGEYCAVKIVNEWLDSADTRIFD.

Residues M95, Y124, H163, 185–187 (SRG), 226–229 (NAMR), and E265 contribute to the substrate site. H269 contributes to the Zn(2+) binding site. A substrate-binding site is contributed by Y292. Residue H333 participates in Zn(2+) binding. Residues C408, C411, and C415 each coordinate [4Fe-4S] cluster.

It belongs to the ThiC family. [4Fe-4S] cluster is required as a cofactor.

It catalyses the reaction 5-amino-1-(5-phospho-beta-D-ribosyl)imidazole + S-adenosyl-L-methionine = 4-amino-2-methyl-5-(phosphooxymethyl)pyrimidine + CO + 5'-deoxyadenosine + formate + L-methionine + 3 H(+). The protein operates within cofactor biosynthesis; thiamine diphosphate biosynthesis. Catalyzes the synthesis of the hydroxymethylpyrimidine phosphate (HMP-P) moiety of thiamine from aminoimidazole ribotide (AIR) in a radical S-adenosyl-L-methionine (SAM)-dependent reaction. The protein is Phosphomethylpyrimidine synthase 1 of Methanothermobacter thermautotrophicus (strain ATCC 29096 / DSM 1053 / JCM 10044 / NBRC 100330 / Delta H) (Methanobacterium thermoautotrophicum).